Reading from the N-terminus, the 246-residue chain is Flavin-dependent thymidylate synthase (246 aa).

The ThyX domain maps to 17–241 (VTVELVKHSA…PLTYAAFNTN (225 aa)). Residues serine 69, 92-94 (RHR), and glutamate 101 each bind FAD. DUMP-binding positions include 89–92 (EFMR), 101–105 (EESGR), and arginine 173. The short motif at 92–103 (RHRVGWSYNEES) is the ThyX motif element. Residues 189–191 (NAR) and histidine 195 contribute to the FAD site. Arginine 200 provides a ligand contact to dUMP. The active-site Involved in ionization of N3 of dUMP, leading to its activation is the arginine 200.

It belongs to the thymidylate synthase ThyX family. Homotetramer. Requires FAD as cofactor.

It carries out the reaction dUMP + (6R)-5,10-methylene-5,6,7,8-tetrahydrofolate + NADPH + H(+) = dTMP + (6S)-5,6,7,8-tetrahydrofolate + NADP(+). Its pathway is pyrimidine metabolism; dTTP biosynthesis. Functionally, catalyzes the reductive methylation of 2'-deoxyuridine-5'-monophosphate (dUMP) to 2'-deoxythymidine-5'-monophosphate (dTMP) while utilizing 5,10-methylenetetrahydrofolate (mTHF) as the methyl donor, and NADPH and FADH(2) as the reductant. This is Flavin-dependent thymidylate synthase from Streptomyces avermitilis (strain ATCC 31267 / DSM 46492 / JCM 5070 / NBRC 14893 / NCIMB 12804 / NRRL 8165 / MA-4680).